The sequence spans 491 residues: Trigger factor (491 aa).

The PPIase FKBP-type domain maps to 169-254; that stretch reads GDRVTIDYLG…VKDVAAAAPI (86 aa). Positions 434 to 491 are disordered; that stretch reads KVSKEELTAEDDADEKPAKKTASKKKAAAKADAAEGEEAAAPKRKAPAKKKASDESAE. Positions 452–461 are enriched in basic residues; the sequence is KKTASKKKAA.

It belongs to the FKBP-type PPIase family. Tig subfamily.

The protein resides in the cytoplasm. It carries out the reaction [protein]-peptidylproline (omega=180) = [protein]-peptidylproline (omega=0). Involved in protein export. Acts as a chaperone by maintaining the newly synthesized protein in an open conformation. Functions as a peptidyl-prolyl cis-trans isomerase. In Sinorhizobium medicae (strain WSM419) (Ensifer medicae), this protein is Trigger factor.